An 865-amino-acid chain; its full sequence is Xylosyltransferase 2 (865 aa).

Residues 1 to 15 (MVASARVQKLVRRYK) are Cytoplasmic-facing. A helical; Signal-anchor for type II membrane protein membrane pass occupies residues 16 to 36 (LAIATALAILLLQGLVVWSFS). At 37–865 (GLEEDEAGEK…GPVKADGRLR (829 aa)) the chain is on the lumenal side. The disordered stretch occupies residues 41 to 157 (DEAGEKGRQR…EGAPQPTDNG (117 aa)). Residues 53-65 (RPLDPGEGSKDTD) are compositionally biased toward basic and acidic residues. Over residues 73-82 (STGRRHGRWR) the composition is skewed to basic residues. Residue Asn122 is glycosylated (N-linked (GlcNAc...) asparagine). Residues 125–137 (GAAAGEALVGAAG) show a composition bias toward low complexity. 4 cysteine pairs are disulfide-bonded: Cys162/Cys190, Cys206/Cys448, Cys467/Cys480, and Cys469/Cys478. Residues Val239, Asp267, and 296–298 (TIW) contribute to the UDP-alpha-D-xylose site. Asn327 carries N-linked (GlcNAc...) asparagine glycosylation. UDP-alpha-D-xylose is bound at residue 400–401 (DW). UDP-alpha-D-xylose contacts are provided by residues Ser481 and 504-505 (RK). 2 cysteine pairs are disulfide-bonded: Cys581/Cys833 and Cys826/Cys839. N-linked (GlcNAc...) asparagine glycosylation occurs at Asn683. The tract at residues 846–865 (SLSPDPKSELGPVKADGRLR) is disordered.

Belongs to the glycosyltransferase 14 family. XylT subfamily. In terms of assembly, monomer. The cofactor is Mg(2+). Mn(2+) is required as a cofactor. In terms of processing, contains disulfide bonds. As to expression, widely expressed. Expressed at higher level in kidney and pancreas.

Its subcellular location is the golgi apparatus membrane. It localises to the secreted. The enzyme catalyses UDP-alpha-D-xylose + L-seryl-[protein] = 3-O-(beta-D-xylosyl)-L-seryl-[protein] + UDP + H(+). It functions in the pathway glycan metabolism; chondroitin sulfate biosynthesis. Its pathway is glycan metabolism; heparan sulfate biosynthesis. Functionally, catalyzes the first step in the biosynthesis of chondroitin sulfate, heparan sulfate and dermatan sulfate proteoglycans, such as DCN. Transfers D-xylose from UDP-D-xylose to specific serine residues of the core protein. The chain is Xylosyltransferase 2 (XYLT2) from Homo sapiens (Human).